The primary structure comprises 655 residues: UvrABC system protein C (655 aa).

The 80-residue stretch at 16–95 folds into the GIY-YIG domain; it reads TDPGVYRFRD…IKEFAPRYNL (80 aa). One can recognise a UVR domain in the interval 207–242; sequence KRFIGTLEKQMAEAVAELDYERAARLRDDVIALRKV.

The protein belongs to the UvrC family. Interacts with UvrB in an incision complex.

The protein localises to the cytoplasm. The UvrABC repair system catalyzes the recognition and processing of DNA lesions. UvrC both incises the 5' and 3' sides of the lesion. The N-terminal half is responsible for the 3' incision and the C-terminal half is responsible for the 5' incision. The polypeptide is UvrABC system protein C (Renibacterium salmoninarum (strain ATCC 33209 / DSM 20767 / JCM 11484 / NBRC 15589 / NCIMB 2235)).